Here is a 317-residue protein sequence, read N- to C-terminus: uncharacterized protein (317 aa).

The protein to A.aeolicus AA11 and AA34.

This is an uncharacterized protein from Aquifex aeolicus (strain VF5).